Consider the following 148-residue polypeptide: Urease accessory protein UreE (148 aa).

The protein belongs to the UreE family.

The protein localises to the cytoplasm. Involved in urease metallocenter assembly. Binds nickel. Probably functions as a nickel donor during metallocenter assembly. This is Urease accessory protein UreE from Geobacillus kaustophilus (strain HTA426).